The primary structure comprises 401 residues: Membrane protein UL43 homolog (401 aa).

10 helical membrane-spanning segments follow: residues 43–63, 67–87, 93–113, 124–144, 159–179, 182–202, 259–279, 294–314, 332–352, and 379–399; these read FVGIGLQACVLTSSILHIDLL, STCLILMIISMYVLSLIRVPI, IVTVCRSIQALATLVAASVWV, LIVVTVCILFVFIAGTQISLF, ASLLAIIGGCVLGVSVKLVEL, VPIGIGIAIAIIASCQDFGLA, PGVIFSPAVGTHATPIIWIVL, YVVFCLTVGHVSAMLLEQLVI, AVCMVLAAFGYGVAAPLSLAF, and ISRWLIVCVYVAAGLCYATII.

The protein belongs to the alphaherpesvirinae HHV-1 UL43 family.

It is found in the membrane. The sequence is that of Membrane protein UL43 homolog from Equine herpesvirus 1 (strain Ab4p) (EHV-1).